Consider the following 245-residue polypeptide: Nodulation protein G (245 aa).

An NAD(+)-binding site is contributed by 11 to 35 (VTGASGGIGEAIARVLHAQGAIVGL). Substrate is bound at residue S139. The active-site Proton acceptor is the Y152.

This sequence belongs to the short-chain dehydrogenases/reductases (SDR) family.

Its function is as follows. Proposed to modify Nod factor fatty acyl chain. The polypeptide is Nodulation protein G (nodG) (Rhizobium sp. (strain N33)).